Here is a 127-residue protein sequence, read N- to C-terminus: Tyrosine-protein phosphatase 2 (127 aa).

The Tyrosine-protein phosphatase domain maps to 1-127; sequence QGSKVIVMVT…PRDCEAPILV (127 aa). Positions 63–81 are enriched in acidic residues; that stretch reads VYDNDDGTEQNDEQTEEEP. Residues 63–82 form a disordered region; sequence VYDNDDGTEQNDEQTEEEPE.

It belongs to the protein-tyrosine phosphatase family.

It catalyses the reaction O-phospho-L-tyrosyl-[protein] + H2O = L-tyrosyl-[protein] + phosphate. This is Tyrosine-protein phosphatase 2 (STY-2) from Styela plicata (Wrinkled sea squirt).